The primary structure comprises 154 residues: NADPH-dependent 7-cyano-7-deazaguanine reductase (154 aa).

The active-site Thioimide intermediate is the C52. Residue D59 is the Proton donor of the active site. Substrate is bound by residues 74–76 (VES) and 93–94 (HE).

It belongs to the GTP cyclohydrolase I family. QueF type 1 subfamily.

It localises to the cytoplasm. It carries out the reaction 7-aminomethyl-7-carbaguanine + 2 NADP(+) = 7-cyano-7-deazaguanine + 2 NADPH + 3 H(+). It participates in tRNA modification; tRNA-queuosine biosynthesis. In terms of biological role, catalyzes the NADPH-dependent reduction of 7-cyano-7-deazaguanine (preQ0) to 7-aminomethyl-7-deazaguanine (preQ1). The protein is NADPH-dependent 7-cyano-7-deazaguanine reductase of Paracoccus denitrificans (strain Pd 1222).